The chain runs to 197 residues: Probable GTP-binding protein EngB (197 aa).

The EngB-type G domain occupies 2–186 (KVKEVIFAGR…KRDLKQYLLS (185 aa)). GTP contacts are provided by residues 10–17 (GRSNVGKS), 35–39 (GTTIR), 52–55 (DLPG), 132–135 (NKMD), and 166–168 (VCA). Mg(2+) is bound by residues Ser-17 and Thr-37.

Belongs to the TRAFAC class TrmE-Era-EngA-EngB-Septin-like GTPase superfamily. EngB GTPase family. It depends on Mg(2+) as a cofactor.

Its function is as follows. Necessary for normal cell division and for the maintenance of normal septation. The polypeptide is Probable GTP-binding protein EngB (Archaeoglobus fulgidus (strain ATCC 49558 / DSM 4304 / JCM 9628 / NBRC 100126 / VC-16)).